The chain runs to 359 residues: WAT1-related protein At4g28040 (359 aa).

Helical transmembrane passes span 10–30, 37–57, 66–86, 103–123, 133–153, 170–190, 204–224, 240–260, 266–286, and 292–312; these read LALVMLQFTSAGVALFTKAAF, TVFVVYRQAIATLFICPISFI, PSLGVRGFWWVALTAVIGVTV, ACAMTNLIPAVTFIISIIVGF, SVAKVIGTGVCVGGAMAMTFL, WLLGCFFLLISTFAWSLWLIL, TSACTCFIATIASFLVALALG, SCCIYSGFQLAISFFLQAWIV, VFSALFNPLSAVIVTFFGALY, and YLGSLLGALAIILGLYIVLWG. An EamA 1 domain is found at 18–131; that stretch reads TSAGVALFTK…GFESIKRRSM (114 aa). In terms of domain architecture, EamA 2 spans 199–310; the sequence is PDHLYTSACT…AIILGLYIVL (112 aa).

The protein belongs to the drug/metabolite transporter (DMT) superfamily. Plant drug/metabolite exporter (P-DME) (TC 2.A.7.4) family.

It is found in the membrane. This Arabidopsis thaliana (Mouse-ear cress) protein is WAT1-related protein At4g28040.